The chain runs to 619 residues: Probable galacturonosyltransferase 7 (619 aa).

Over 1-19 (MKGGGGGGGGGGGGKRRWK) the chain is Cytoplasmic. A helical; Signal-anchor for type II membrane protein transmembrane segment spans residues 20–40 (VLVIGVLVLVILSMLVPLAFL). The Lumenal portion of the chain corresponds to 41 to 619 (LGLHNGFHSP…RFLSDCNVNP (579 aa)). N-linked (GlcNAc...) asparagine glycosylation is found at Asn68, Asn106, Asn132, Asn343, and Asn421. The tract at residues 95 to 139 (KSDINVGSRDVNATSGTDSKKRGLPVSPTVVANPSPANKTKSEAS) is disordered. A compositionally biased stretch (polar residues) spans 124-139 (VVANPSPANKTKSEAS).

Belongs to the glycosyltransferase 8 family. Expressed in roots, inflorescences, flowers, siliques, leaves and stems.

Its subcellular location is the golgi apparatus membrane. It functions in the pathway glycan metabolism; pectin biosynthesis. Its function is as follows. May be involved in pectin biosynthesis. This is Probable galacturonosyltransferase 7 (GAUT7) from Arabidopsis thaliana (Mouse-ear cress).